A 136-amino-acid polypeptide reads, in one-letter code: Pterin-4-alpha-carbinolamine dehydratase 2 (136 aa).

N6-acetyllysine; alternate is present on residues lysine 120, lysine 124, and lysine 131. Residues lysine 120, lysine 124, and lysine 131 each carry the N6-succinyllysine; alternate modification.

The protein belongs to the pterin-4-alpha-carbinolamine dehydratase family. In terms of assembly, homotetramer. Interacts with DYRK1B.

It carries out the reaction (4aS,6R)-4a-hydroxy-L-erythro-5,6,7,8-tetrahydrobiopterin = (6R)-L-erythro-6,7-dihydrobiopterin + H2O. In terms of biological role, involved in tetrahydrobiopterin biosynthesis. Seems to both prevent the formation of 7-pterins and accelerate the formation of quinonoid-BH2. Its function is as follows. Regulates the dimerization of homeodomain protein HNF-1-alpha and enhances its transcriptional activity. The chain is Pterin-4-alpha-carbinolamine dehydratase 2 (Pcbd2) from Mus musculus (Mouse).